A 220-amino-acid polypeptide reads, in one-letter code: 7-cyano-7-deazaguanine synthase (220 aa).

10-20 (FSGGQDSTTCL) contributes to the ATP binding site. Residues Cys-188, Cys-197, Cys-200, and Cys-203 each contribute to the Zn(2+) site.

It belongs to the QueC family. The cofactor is Zn(2+).

The enzyme catalyses 7-carboxy-7-deazaguanine + NH4(+) + ATP = 7-cyano-7-deazaguanine + ADP + phosphate + H2O + H(+). It participates in purine metabolism; 7-cyano-7-deazaguanine biosynthesis. Functionally, catalyzes the ATP-dependent conversion of 7-carboxy-7-deazaguanine (CDG) to 7-cyano-7-deazaguanine (preQ(0)). The sequence is that of 7-cyano-7-deazaguanine synthase from Neisseria meningitidis serogroup C (strain 053442).